Consider the following 274-residue polypeptide: Penicillin-insensitive murein endopeptidase (274 aa).

The N-terminal stretch at 1–19 (MNKTAIALLALLASSASLA) is a signal peptide. 3 disulfides stabilise this stretch: Cys-44-Cys-265, Cys-187-Cys-235, and Cys-216-Cys-223. His-110, His-113, Asp-120, Asp-147, His-150, and His-211 together coordinate Zn(2+). Residues 227–274 (PLPPPGDGCGAELQSWFEPPKPGTTKPEKKTPPPLPPSCQALLDEHVI) form a disordered region.

This sequence belongs to the peptidase M74 family. As to quaternary structure, dimer. Zn(2+) serves as cofactor.

It localises to the periplasm. Its function is as follows. Murein endopeptidase that cleaves the D-alanyl-meso-2,6-diamino-pimelyl amide bond that connects peptidoglycan strands. Likely plays a role in the removal of murein from the sacculus. The polypeptide is Penicillin-insensitive murein endopeptidase (Escherichia coli (strain SE11)).